The chain runs to 298 residues: Thymidylate synthase (298 aa).

Residues arginine 25 and 159 to 160 contribute to the dUMP site; that span reads RR. The active-site Nucleophile is cysteine 179. DUMP-binding positions include 200–203, asparagine 211, and 241–243; these read RSVD and HLY. Position 203 (aspartate 203) interacts with (6R)-5,10-methylene-5,6,7,8-tetrahydrofolate. Position 297 (alanine 297) interacts with (6R)-5,10-methylene-5,6,7,8-tetrahydrofolate.

Belongs to the thymidylate synthase family. Bacterial-type ThyA subfamily. In terms of assembly, homodimer.

It localises to the cytoplasm. The catalysed reaction is dUMP + (6R)-5,10-methylene-5,6,7,8-tetrahydrofolate = 7,8-dihydrofolate + dTMP. Its pathway is pyrimidine metabolism; dTTP biosynthesis. Its function is as follows. Catalyzes the reductive methylation of 2'-deoxyuridine-5'-monophosphate (dUMP) to 2'-deoxythymidine-5'-monophosphate (dTMP) while utilizing 5,10-methylenetetrahydrofolate (mTHF) as the methyl donor and reductant in the reaction, yielding dihydrofolate (DHF) as a by-product. This enzymatic reaction provides an intracellular de novo source of dTMP, an essential precursor for DNA biosynthesis. In Cereibacter sphaeroides (strain ATCC 17025 / ATH 2.4.3) (Rhodobacter sphaeroides), this protein is Thymidylate synthase.